The sequence spans 102 residues: Omega-hexatoxin-Hi2a (102 aa).

The N-terminal stretch at Met1–Gly23 is a signal peptide. A propeptide spanning residues Lys24–Arg56 is cleaved from the precursor. Disulfide bonds link Cys61–Cys75, Cys68–Cys81, and Cys74–Cys86. Leu98 carries the leucine amide modification. The propeptide occupies Arg100–Leu102.

This sequence belongs to the neurotoxin 15 family. 02 (omega-actx) subfamily. In terms of tissue distribution, expressed by the venom gland.

The protein localises to the secreted. In terms of biological role, potent inhibitor of insect, but not mammalian, voltage-gated calcium channels (Cav). In Hadronyche infensa (Fraser island funnel-web spider), this protein is Omega-hexatoxin-Hi2a.